The sequence spans 188 residues: Ribosome maturation factor RimM (188 aa).

In terms of domain architecture, PRC barrel spans 112 to 187 (SDSYYWVDLI…LLTLDWQSDW (76 aa)).

This sequence belongs to the RimM family. As to quaternary structure, binds ribosomal protein uS19.

The protein resides in the cytoplasm. An accessory protein needed during the final step in the assembly of 30S ribosomal subunit, possibly for assembly of the head region. Essential for efficient processing of 16S rRNA. May be needed both before and after RbfA during the maturation of 16S rRNA. It has affinity for free ribosomal 30S subunits but not for 70S ribosomes. The chain is Ribosome maturation factor RimM from Polynucleobacter asymbioticus (strain DSM 18221 / CIP 109841 / QLW-P1DMWA-1) (Polynucleobacter necessarius subsp. asymbioticus).